Consider the following 374-residue polypeptide: Ribosomal RNA large subunit methyltransferase G (374 aa).

Belongs to the methyltransferase superfamily. RlmG family.

Its subcellular location is the cytoplasm. It catalyses the reaction guanosine(1835) in 23S rRNA + S-adenosyl-L-methionine = N(2)-methylguanosine(1835) in 23S rRNA + S-adenosyl-L-homocysteine + H(+). In terms of biological role, specifically methylates the guanine in position 1835 (m2G1835) of 23S rRNA. In Pseudomonas putida (strain GB-1), this protein is Ribosomal RNA large subunit methyltransferase G.